A 346-amino-acid polypeptide reads, in one-letter code: fMet-Leu-Phe receptor (346 aa).

N-linked (GlcNAc...) asparagine glycans are attached at residues Asn1 and Asn7. Residues 1–24 (NSSLPTNISGGTPAVSAGYLFLDI) lie on the Extracellular side of the membrane. A helical membrane pass occupies residues 25–47 (VTYLVFAVTFVLGVLGNGLVIWV). Topologically, residues 48-58 (AGFRMTHTVTT) are cytoplasmic. Residues 59–80 (ISYLNLAVADFCFTSTLPFFMV) traverse the membrane as a helical segment. Residues 81–97 (KKAMGGHWPFGWFLCKF) lie on the Extracellular side of the membrane. Cys95 and Cys173 are disulfide-bonded. A helical transmembrane segment spans residues 98–118 (IFTIVDINLFGSVFLIALIAL). The Cytoplasmic segment spans residues 119–137 (DRCVCVLHPVWTQNHRTVS). A helical transmembrane segment spans residues 138–159 (LAKKVIIGPWVMALLLTLPVII). Residues 160-202 (RVTTVPGKMGTVACTFNFSPWTNDPKERIKVAVAMLTVRGIIR) are Extracellular-facing. A helical transmembrane segment spans residues 203–223 (FIIGFSAPMSIVAVSYGLIAT). The Cytoplasmic segment spans residues 224–239 (KIDKQGLIKSSRTLRV). A helical membrane pass occupies residues 240-263 (LSFVAAAFFLSWSPYQVVALIATV). The Extracellular portion of the chain corresponds to 264–282 (RIRELLQGMYKEIGIAVDV). The helical transmembrane segment at 283 to 302 (TSALAFFNSCLNPMLYVFMG) threads the bilayer. Over 303–346 (QDFRERLIHALPASLERALTEDSTQTSDTATNSTLPSAEVALQA) the chain is Cytoplasmic. The disordered stretch occupies residues 322–346 (TEDSTQTSDTATNSTLPSAEVALQA). The segment covering 323–338 (EDSTQTSDTATNSTLP) has biased composition (polar residues).

It belongs to the G-protein coupled receptor 1 family. In terms of processing, phosphorylated; which is necessary for desensitization.

The protein resides in the cell membrane. Functionally, high affinity receptor for N-formyl-methionyl peptides (fMLP), which are powerful neutrophil chemotactic factors. Binding of fMLP to the receptor stimulates intracellular calcium mobilization and superoxide anion release. This response is mediated via a G-protein that activates a phosphatidylinositol-calcium second messenger system. Receptor for TAFA4, mediates its effects on chemoattracting macrophages, promoting phagocytosis and increasing ROS release. Receptor for cathepsin CTSG, leading to increased phagocyte chemotaxis. This Gorilla gorilla gorilla (Western lowland gorilla) protein is fMet-Leu-Phe receptor (FPR1).